We begin with the raw amino-acid sequence, 523 residues long: Siroheme synthase (523 aa).

Positions 1–203 (MNTFPLFFKL…GNENEAIAQL (203 aa)) are precorrin-2 dehydrogenase /sirohydrochlorin ferrochelatase. NAD(+) contacts are provided by residues 22–23 (DV) and 43–44 (PS). Ser-128 bears the Phosphoserine mark. The interval 231 to 523 (GEVYIVGAGP…DGGLEQLVID (293 aa)) is uroporphyrinogen-III C-methyltransferase. Pro-240 provides a ligand contact to S-adenosyl-L-methionine. The active-site Proton acceptor is Asp-263. Lys-285 serves as the catalytic Proton donor. S-adenosyl-L-methionine-binding positions include 316-318 (GGD), Ile-321, 346-347 (TA), Met-398, and Ala-427.

The protein in the N-terminal section; belongs to the precorrin-2 dehydrogenase / sirohydrochlorin ferrochelatase family. It in the C-terminal section; belongs to the precorrin methyltransferase family.

It catalyses the reaction uroporphyrinogen III + 2 S-adenosyl-L-methionine = precorrin-2 + 2 S-adenosyl-L-homocysteine + H(+). The enzyme catalyses precorrin-2 + NAD(+) = sirohydrochlorin + NADH + 2 H(+). The catalysed reaction is siroheme + 2 H(+) = sirohydrochlorin + Fe(2+). The protein operates within cofactor biosynthesis; adenosylcobalamin biosynthesis; precorrin-2 from uroporphyrinogen III: step 1/1. It functions in the pathway cofactor biosynthesis; adenosylcobalamin biosynthesis; sirohydrochlorin from precorrin-2: step 1/1. Its pathway is porphyrin-containing compound metabolism; siroheme biosynthesis; precorrin-2 from uroporphyrinogen III: step 1/1. It participates in porphyrin-containing compound metabolism; siroheme biosynthesis; siroheme from sirohydrochlorin: step 1/1. The protein operates within porphyrin-containing compound metabolism; siroheme biosynthesis; sirohydrochlorin from precorrin-2: step 1/1. Functionally, multifunctional enzyme that catalyzes the SAM-dependent methylations of uroporphyrinogen III at position C-2 and C-7 to form precorrin-2 via precorrin-1. Then it catalyzes the NAD-dependent ring dehydrogenation of precorrin-2 to yield sirohydrochlorin. Finally, it catalyzes the ferrochelation of sirohydrochlorin to yield siroheme. The polypeptide is Siroheme synthase (Psychrobacter cryohalolentis (strain ATCC BAA-1226 / DSM 17306 / VKM B-2378 / K5)).